We begin with the raw amino-acid sequence, 436 residues long: Serine/threonine-protein kinase STK11 (436 aa).

Ser31 is modified (phosphoserine). N6-acetyllysine occurs at positions 44 and 48. The sufficient for interaction with SIRT1 stretch occupies residues 45–90 (LIGKYLMGDLLGEGSYGKVKEVLDSETLCRRAVKILKKKKLRRIPN). One can recognise a Protein kinase domain in the interval 49 to 309 (YLMGDLLGEG…IRQIRQHSWF (261 aa)). ATP contacts are provided by residues 55-63 (LGEGSYGKV) and Lys78. N6-acetyllysine occurs at positions 96 and 97. Catalysis depends on Asp176, which acts as the Proton acceptor. Residue Thr189 is modified to Phosphothreonine; by autocatalysis. Lys296 and Lys311 each carry N6-acetyllysine. Ser325 is subject to Phosphoserine. Thr336 bears the Phosphothreonine; by autocatalysis mark. Thr366 carries the phosphothreonine; by ATM and autocatalysis modification. The segment at 397–421 (GTEPQLSSKVKPEGRPGAANPARKV) is disordered. Ser403 is modified (phosphoserine). Lys420 is subject to N6-acetyllysine. A lipid anchor (S-palmitoyl cysteine) is attached at Cys422. Lys426 bears the N6-acetyllysine mark. Ser431 is modified (phosphoserine; by autocatalysis, PKA, PKC/PRKCZ and RPS6KA1). Position 433 is a cysteine methyl ester (Cys433). Residue Cys433 is the site of S-farnesyl cysteine attachment. Lys434 is subject to N6-acetyllysine. Residues 434-436 (KQQ) constitute a propeptide, removed in mature form.

The protein belongs to the protein kinase superfamily. CAMK Ser/Thr protein kinase family. LKB1 subfamily. Catalytic component of a trimeric complex composed of STK11/LKB1, STRAD (STRADA or STRADB) and CAB39/MO25 (CAB39/MO25alpha or CAB39L/MO25beta): the complex tethers STK11/LKB1 in the cytoplasm and stimulates its catalytic activity. Found in a ternary complex composed of SMAD4, STK11/LKB1 and STK11IP. Interacts with NR4A1, p53/TP53, SMAD4, STK11IP and WDR6. Interacts with NISCH; this interaction may increase STK11 activity. Interacts with SIRT1; the interaction deacetylates STK11. Interacts with CDKN1A. Mg(2+) is required as a cofactor. Requires Mn(2+) as cofactor. Post-translationally, phosphorylated by ATM at Thr-366 following ionizing radiation (IR). Phosphorylation at Ser-431 by RPS6KA1 and/or some PKA is required to inhibit cell growth. Phosphorylation at Ser-431 is also required during neuronal polarization to mediate phosphorylation of BRSK1 and BRSK2. Phosphorylation by PKC/PRKCZ at Ser-397 in isoform 2 promotes metformin (or peroxynitrite)-induced nuclear export of STK11 and activation of AMPK. UV radiation -induced phosphorylation at Thr-366 mediates CDKN1A degradation. In terms of processing, acetylated. Deacetylation at Lys-48 enhances cytoplasmic localization and kinase activity in vitro. As to expression, expressed in brain, heart, testis, skeletal muscle and spleen, and weakly in liver and kidney. Isoform 1 is expressed at highest levels in the brain. Isoform 2 is expressed at highest levels in the testis, primarily in postmitotic developing germ cells (at protein level).

The protein localises to the nucleus. Its subcellular location is the cytoplasm. It localises to the membrane. It is found in the mitochondrion. The enzyme catalyses L-seryl-[protein] + ATP = O-phospho-L-seryl-[protein] + ADP + H(+). The catalysed reaction is L-threonyl-[protein] + ATP = O-phospho-L-threonyl-[protein] + ADP + H(+). With respect to regulation, activated by forming a complex with STRAD (STRADA or STRADB) and CAB39/MO25 (CAB39/MO25alpha or CAB39L/MO25beta): STRADA (or STRADB)-binding promotes a conformational change of STK11/LKB1 in an active conformation, which is stabilized by CAB39/MO25alpha (or CAB39L/MO25beta) interacting with the STK11/LKB1 activation loop. Sequestration in the nucleus by NR4A1 prevents it from phosphorylating and activating cytoplasmic AMPK. Functionally, tumor suppressor serine/threonine-protein kinase that controls the activity of AMP-activated protein kinase (AMPK) family members, thereby playing a role in various processes such as cell metabolism, cell polarity, apoptosis and DNA damage response. Acts by phosphorylating the T-loop of AMPK family proteins, thus promoting their activity: phosphorylates PRKAA1, PRKAA2, BRSK1, BRSK2, MARK1, MARK2, MARK3, MARK4, NUAK1, NUAK2, SIK1, SIK2, SIK3 and SNRK but not MELK. Also phosphorylates non-AMPK family proteins such as STRADA, PTEN and possibly p53/TP53. Acts as a key upstream regulator of AMPK by mediating phosphorylation and activation of AMPK catalytic subunits PRKAA1 and PRKAA2 and thereby regulates processes including: inhibition of signaling pathways that promote cell growth and proliferation when energy levels are low, glucose homeostasis in liver, activation of autophagy when cells undergo nutrient deprivation, and B-cell differentiation in the germinal center in response to DNA damage. Also acts as a regulator of cellular polarity by remodeling the actin cytoskeleton. Required for cortical neuron polarization by mediating phosphorylation and activation of BRSK1 and BRSK2, leading to axon initiation and specification. Involved in DNA damage response: interacts with p53/TP53 and recruited to the CDKN1A/WAF1 promoter to participate in transcription activation. Able to phosphorylate p53/TP53; the relevance of such result in vivo is however unclear and phosphorylation may be indirect and mediated by downstream STK11/LKB1 kinase NUAK1. Also acts as a mediator of p53/TP53-dependent apoptosis via interaction with p53/TP53: translocates to the mitochondrion during apoptosis and regulates p53/TP53-dependent apoptosis pathways. Regulates UV radiation-induced DNA damage response mediated by CDKN1A. In association with NUAK1, phosphorylates CDKN1A in response to UV radiation and contributes to its degradation which is necessary for optimal DNA repair. Has a role in spermiogenesis. This chain is Serine/threonine-protein kinase STK11, found in Rattus norvegicus (Rat).